The chain runs to 343 residues: Thioredoxin domain-containing protein 15 (343 aa).

The N-terminal stretch at 1–20 (MQLLCWWQILLWVLGLPARG) is a signal peptide. At 21–304 (LEEDSGHTWQ…GPLPSTLVKT (284 aa)) the chain is on the extracellular side. Residues 86 to 95 (EDQRSTEAHD) are compositionally biased toward basic and acidic residues. The segment at 86–112 (EDQRSTEAHDGTCSAQGDEDPRCGGRE) is disordered. In terms of domain architecture, Thioredoxin spans 162–279 (ERNVTGLENF…LKIFIFNQTG (118 aa)). N-linked (GlcNAc...) asparagine glycosylation is found at Asn-170, Asn-177, Asn-189, and Asn-276. A helical transmembrane segment spans residues 305–325 (VDWLLVFSLFFLISFIMYATI). At 326–343 (RTESIRWLIPGQEQEHAE) the chain is on the cytoplasmic side.

Its subcellular location is the cell projection. The protein resides in the cilium membrane. Its function is as follows. Acts as a positive regulator of ciliary hedgehog signaling. Required for cilia biogenesis. The chain is Thioredoxin domain-containing protein 15 (Txndc15) from Rattus norvegicus (Rat).